Consider the following 265-residue polypeptide: Phosphatidylglycerol--prolipoprotein diacylglyceryl transferase (265 aa).

A run of 7 helical transmembrane segments spans residues 17–37 (LAIR…IWLA), 59–79 (MLFY…VLFY), 94–114 (VWKG…AMSI), 123–143 (VLDV…FGRL), 177–197 (SPLY…WLFA), 204–224 (MAVG…TEYF), and 238–258 (ISAG…MLLI). Arg142 provides a ligand contact to a 1,2-diacyl-sn-glycero-3-phospho-(1'-sn-glycerol).

Belongs to the Lgt family.

It is found in the cell inner membrane. The catalysed reaction is L-cysteinyl-[prolipoprotein] + a 1,2-diacyl-sn-glycero-3-phospho-(1'-sn-glycerol) = an S-1,2-diacyl-sn-glyceryl-L-cysteinyl-[prolipoprotein] + sn-glycerol 1-phosphate + H(+). Its pathway is protein modification; lipoprotein biosynthesis (diacylglyceryl transfer). Functionally, catalyzes the transfer of the diacylglyceryl group from phosphatidylglycerol to the sulfhydryl group of the N-terminal cysteine of a prolipoprotein, the first step in the formation of mature lipoproteins. This Janthinobacterium sp. (strain Marseille) (Minibacterium massiliensis) protein is Phosphatidylglycerol--prolipoprotein diacylglyceryl transferase.